The primary structure comprises 111 residues: Secreted RxLR effector protein 159 (111 aa).

An N-terminal signal peptide occupies residues 1–21 (MRGAYYVAIAFLVAASSRTAA). Residues 50-71 (RVLRGSRDLKDKLAVYANDEQR) carry the RxLR-dEER motif. Residue Asn81 is glycosylated (N-linked (GlcNAc...) asparagine).

It belongs to the RxLR effector family.

It is found in the secreted. Its subcellular location is the host nucleus. The protein resides in the host cytoplasm. In terms of biological role, secreted effector that completely suppresses the host cell death induced by cell death-inducing proteins. The protein is Secreted RxLR effector protein 159 of Plasmopara viticola (Downy mildew of grapevine).